The primary structure comprises 570 residues: MIPPEIRRSVLLQKAIKLALAGTLLTFASFSATAADPSSDTETPQPPDILLGPLFNDVQNAKLFPDQKTFADAIPNSDPLMILADYRMQRNQSGFDLRHFVDVNFTLPKAGEKYVPPAGQSLREHIDGLWPVLTRSTKNVEKWDSLLPLPESYVVPGGRFREIYYWDSYFTMLGLAESGHWDKVADMVANFGYEIDAWGHIPNGNRTYYLSRSQPPFFAFMVELLAQHEGDDALKEYLPQLQKEYAYWMEGVETLQPGQQNQRVVKLEDGSVLNRYWDDRDTPRPESWVEDIATAKSNPNRPATEIYRDLRSAAASGWDFSSRWMDNPQQLSTIRTTTIVPVDLNALLYQLEKTLARASAAAGDRAKASQYDALANARQKAIEMHLWNNKEGWYADYDLQNNKIRNQLTAAALFPLYVNAAAKDRAAKVAAAAQAHLLQPGGLATTSVKSGQQWDAPNGWAPLQWVAAEGLQNYGQDDVAMEVTWRFLTNVQHTYDREKKLVEKYDVSSTGTGGGGGEYPLQDGFGWTNGVTLKMLDLICPQEKPCDSVPSTRPASLSATPTKTPSAATQ.

Positions 1–34 (MIPPEIRRSVLLQKAIKLALAGTLLTFASFSATA) are cleaved as a signal peptide. Substrate-binding positions include arginine 159, 166-167 (WD), asparagine 203, 212-214 (RSQ), 284-286 (RPE), and glycine 317. Residues aspartate 319 and glutamate 503 each act as proton donor/acceptor in the active site. Position 518 (glutamate 518) interacts with substrate. The tract at residues 545–570 (PCDSVPSTRPASLSATPTKTPSAATQ) is disordered. The span at 554–570 (PASLSATPTKTPSAATQ) shows a compositional bias: low complexity.

The protein belongs to the glycosyl hydrolase 37 family. Monomer.

The protein resides in the periplasm. It carries out the reaction alpha,alpha-trehalose + H2O = alpha-D-glucose + beta-D-glucose. Functionally, provides the cells with the ability to utilize trehalose at high osmolarity by splitting it into glucose molecules that can subsequently be taken up by the phosphotransferase-mediated uptake system. The protein is Periplasmic trehalase of Salmonella agona (strain SL483).